The chain runs to 372 residues: Cytochrome b (372 aa).

A run of 4 helical transmembrane segments spans residues 25 to 45 (FGSM…FLAI), 69 to 90 (WIMQ…YIHI), 105 to 125 (WVSG…GYVL), and 170 to 190 (FFAL…IHVM). Heme b contacts are provided by H75 and H89. H174 and H188 together coordinate heme b. H193 lines the a ubiquinone pocket. 4 consecutive transmembrane segments (helical) span residues 218-238 (YKDT…TSFF), 280-300 (LGGT…PFTH), 312-332 (MAQV…WAAT), and 339-358 (FTTI…IINP).

This sequence belongs to the cytochrome b family. In terms of assembly, the cytochrome bc1 complex contains 3 respiratory subunits (MT-CYB, CYC1 and UQCRFS1), 2 core proteins (UQCRC1 and UQCRC2) and probably 6 low-molecular weight proteins. Heme b serves as cofactor.

The protein resides in the mitochondrion inner membrane. Component of the ubiquinol-cytochrome c reductase complex (complex III or cytochrome b-c1 complex) that is part of the mitochondrial respiratory chain. The b-c1 complex mediates electron transfer from ubiquinol to cytochrome c. Contributes to the generation of a proton gradient across the mitochondrial membrane that is then used for ATP synthesis. This Heterodon simus (Southern hognose snake) protein is Cytochrome b (MT-CYB).